Here is a 289-residue protein sequence, read N- to C-terminus: (+)-kolavelool synthase (289 aa).

This sequence belongs to the diterpene synthase family.

The catalysed reaction is (+)-kolavenyl diphosphate + H2O = (+)-kolavelool + diphosphate. Its function is as follows. Involved in the biosynthesis of (+)-O-methylkolavelool. Catalyzes the biosynthesis of (+)-kolavelool from (+)-kolavenyl diphosphate via the release of the diphosphate moiety through the nucleophilic addition of a water molecule. This is (+)-kolavelool synthase from Herpetosiphon aurantiacus (strain ATCC 23779 / DSM 785 / 114-95).